Reading from the N-terminus, the 302-residue chain is Aurora/IPL1-related protein kinase 2 (302 aa).

Residues 1–17 (MENKPQILQTKSKNTPN) show a composition bias toward polar residues. The tract at residues 1 to 23 (MENKPQILQTKSKNTPNKGGKLS) is disordered. In terms of domain architecture, Protein kinase spans 27–277 (FEIGRPLGKG…LQEVKDHYWV (251 aa)). Residues 33-41 (LGKGKFGSV) and Lys56 contribute to the ATP site. Asp150 functions as the Proton acceptor in the catalytic mechanism.

Belongs to the protein kinase superfamily. Ser/Thr protein kinase family. In terms of assembly, interacts with zen-4 and icp-1. Part of a complex containing at least air-2; icp-1; csc-1 and bir-1. Interacts with tlk-1 and bmk-1.

It localises to the cytoplasm. It is found in the cytoskeleton. The protein localises to the chromosome. The protein resides in the midbody. The catalysed reaction is L-seryl-[protein] + ATP = O-phospho-L-seryl-[protein] + ADP + H(+). The enzyme catalyses L-threonyl-[protein] + ATP = O-phospho-L-threonyl-[protein] + ADP + H(+). Its function is as follows. Serine/threonine-protein kinase which mediates both meiotic and mitotic chromosome segregation. Required for histone H3 'Ser-10' phosphorylation. Phosphorylates tlk-1 and zen-4. In Caenorhabditis briggsae, this protein is Aurora/IPL1-related protein kinase 2 (air-2).